A 130-amino-acid polypeptide reads, in one-letter code: Fluoride-specific ion channel FluC (130 aa).

The next 4 membrane-spanning stretches (helical) occupy residues 10–30 (FAVA…SLWF), 41–61 (GTLI…TVAM), 72–89 (LLFG…STYE), and 105–125 (LVYW…GILL). Na(+) is bound by residues Gly-80 and Thr-83.

This sequence belongs to the fluoride channel Fluc/FEX (TC 1.A.43) family.

Its subcellular location is the cell inner membrane. It catalyses the reaction fluoride(in) = fluoride(out). Na(+) is not transported, but it plays an essential structural role and its presence is essential for fluoride channel function. Functionally, fluoride-specific ion channel. Important for reducing fluoride concentration in the cell, thus reducing its toxicity. The protein is Fluoride-specific ion channel FluC of Synechococcus sp. (strain JA-2-3B'a(2-13)) (Cyanobacteria bacterium Yellowstone B-Prime).